The primary structure comprises 198 residues: Ribonuclease HII (198 aa).

One can recognise an RNase H type-2 domain in the interval 10–198 (QLVAGVDEVG…PVKRALGLAS (189 aa)). A divalent metal cation-binding residues include Asp-16, Glu-17, and Asp-108.

The protein belongs to the RNase HII family. Mn(2+) is required as a cofactor. Requires Mg(2+) as cofactor.

The protein localises to the cytoplasm. It catalyses the reaction Endonucleolytic cleavage to 5'-phosphomonoester.. Its function is as follows. Endonuclease that specifically degrades the RNA of RNA-DNA hybrids. The protein is Ribonuclease HII of Citrobacter koseri (strain ATCC BAA-895 / CDC 4225-83 / SGSC4696).